A 498-amino-acid polypeptide reads, in one-letter code: Glycerol kinase (498 aa).

Thr-12 contributes to the ADP binding site. The ATP site is built by Thr-12, Thr-13, and Ser-14. Thr-12 contributes to the sn-glycerol 3-phosphate binding site. Arg-16 is an ADP binding site. 4 residues coordinate sn-glycerol 3-phosphate: Arg-82, Glu-83, Tyr-134, and Asp-243. 5 residues coordinate glycerol: Arg-82, Glu-83, Tyr-134, Asp-243, and Gln-244. ADP is bound by residues Thr-265 and Gly-308. Positions 265, 308, 312, and 409 each coordinate ATP. 2 residues coordinate ADP: Gly-409 and Asn-413.

This sequence belongs to the FGGY kinase family. As to quaternary structure, homotetramer and homodimer (in equilibrium).

It catalyses the reaction glycerol + ATP = sn-glycerol 3-phosphate + ADP + H(+). The protein operates within polyol metabolism; glycerol degradation via glycerol kinase pathway; sn-glycerol 3-phosphate from glycerol: step 1/1. Its activity is regulated as follows. Activated by phosphorylation and inhibited by fructose 1,6-bisphosphate (FBP). Key enzyme in the regulation of glycerol uptake and metabolism. Catalyzes the phosphorylation of glycerol to yield sn-glycerol 3-phosphate. This is Glycerol kinase from Clostridium botulinum (strain Okra / Type B1).